A 114-amino-acid chain; its full sequence is Small ribosomal subunit protein bS6 (114 aa).

Belongs to the bacterial ribosomal protein bS6 family.

Its function is as follows. Binds together with bS18 to 16S ribosomal RNA. This chain is Small ribosomal subunit protein bS6, found in Bacteroides fragilis (strain YCH46).